The sequence spans 167 residues: Ribosome maturation factor RimP (167 aa).

This sequence belongs to the RimP family.

The protein resides in the cytoplasm. Its function is as follows. Required for maturation of 30S ribosomal subunits. This chain is Ribosome maturation factor RimP, found in Cytophaga hutchinsonii (strain ATCC 33406 / DSM 1761 / CIP 103989 / NBRC 15051 / NCIMB 9469 / D465).